The following is a 281-amino-acid chain: Phosphatidylglycerol--prolipoprotein diacylglyceryl transferase (281 aa).

A run of 7 helical transmembrane segments spans residues 11–31 (IIFT…VISF), 57–77 (LLYS…IIFY), 89–109 (VFYI…AIIV), 121–141 (ILEI…AGRI), 194–214 (PTQL…IYFF), 222–242 (GSIS…IEFF), and 255–275 (IITM…IIMY). Arg140 contacts a 1,2-diacyl-sn-glycero-3-phospho-(1'-sn-glycerol).

Belongs to the Lgt family.

The protein resides in the cell inner membrane. It carries out the reaction L-cysteinyl-[prolipoprotein] + a 1,2-diacyl-sn-glycero-3-phospho-(1'-sn-glycerol) = an S-1,2-diacyl-sn-glyceryl-L-cysteinyl-[prolipoprotein] + sn-glycerol 1-phosphate + H(+). The protein operates within protein modification; lipoprotein biosynthesis (diacylglyceryl transfer). Functionally, catalyzes the transfer of the diacylglyceryl group from phosphatidylglycerol to the sulfhydryl group of the N-terminal cysteine of a prolipoprotein, the first step in the formation of mature lipoproteins. The protein is Phosphatidylglycerol--prolipoprotein diacylglyceryl transferase of Buchnera aphidicola subsp. Acyrthosiphon pisum (strain 5A).